Here is a 327-residue protein sequence, read N- to C-terminus: Inactive peptidyl-prolyl cis-trans isomerase FKBP6 (327 aa).

Residues 54-143 (DASVLVKYSG…LFEIELIDFL (90 aa)) form the PPIase FKBP-type domain. TPR repeat units follow at residues 171-204 (AATE…LHRR), 219-252 (LLVL…DKRN), and 253-286 (AKAL…QPCN).

This sequence belongs to the FKBP6 family. Interacts with HSP72/HSPA2 and CLTC. Interacts with GAPDH; leading to inhibit GAPDH catalytic activity. Interacts (via TPR repeats) with HSP90. Testis-specific.

The protein resides in the cytoplasm. Its subcellular location is the cytosol. It is found in the nucleus. The protein localises to the chromosome. In terms of biological role, co-chaperone required during spermatogenesis to repress transposable elements and prevent their mobilization, which is essential for the germline integrity. Acts via the piRNA metabolic process, which mediates the repression of transposable elements during meiosis by forming complexes composed of piRNAs and Piwi proteins and govern the methylation and subsequent repression of transposons. Acts as a co-chaperone via its interaction with HSP90 and is required for the piRNA amplification process, the secondary piRNA biogenesis. May be required together with HSP90 in removal of 16 nucleotide ping-pong by-products from Piwi complexes, possibly facilitating turnover of Piwi complexes. The polypeptide is Inactive peptidyl-prolyl cis-trans isomerase FKBP6 (Fkbp6) (Mus musculus (Mouse)).